The following is a 71-amino-acid chain: Putative membrane protein insertion efficiency factor (71 aa).

It belongs to the UPF0161 family.

Its subcellular location is the cell membrane. In terms of biological role, could be involved in insertion of integral membrane proteins into the membrane. The chain is Putative membrane protein insertion efficiency factor from Ruminiclostridium cellulolyticum (strain ATCC 35319 / DSM 5812 / JCM 6584 / H10) (Clostridium cellulolyticum).